The chain runs to 365 residues: SWR1 complex subunit 2 (365 aa).

2 disordered regions span residues 43-83 (ALKE…NEKE) and 95-147 (PGKT…EGEK). Over residues 48 to 74 (EHDDEYEAEREVADEFDSDFNDDEPEP) the composition is skewed to acidic residues. Positions 99–108 (ASKKKKKKTK) are enriched in basic residues. Over residues 118-132 (GDEKPGEELGNKEQE) the composition is skewed to basic and acidic residues. Coiled coils occupy residues 123 to 150 (GEELGNKEQEEKEENEAQEDMEGEKVIR) and 184 to 225 (GEEK…KAIV). Residues 133-144 (EKEENEAQEDME) show a composition bias toward acidic residues. Residues 333 to 365 (RTKIPKSNKSFSLRSSARFLSSESEEESEEDSD) form a disordered region. The span at 342–354 (SFSLRSSARFLSS) shows a compositional bias: low complexity. Over residues 355–365 (ESEEESEEDSD) the composition is skewed to acidic residues.

The protein belongs to the VPS72/YL1 family. In terms of assembly, component of the SWR1 chromatin-remodeling complex composed of at least ARP6/ESD1/SUF3, PIE1, SWC6, SWC2 and H2AZs (HTA8, HTA9, HTA11). Interacts directly with SWC6 and H2AZs, but not with ARP6.

Component of the SWR1 complex which mediates the ATP-dependent exchange of histone H2A for the H2A variant H2A.F/Z leading to transcriptional regulation of selected genes (e.g. FLC) by chromatin remodeling. The protein is SWR1 complex subunit 2 (SWC2) of Arabidopsis thaliana (Mouse-ear cress).